The sequence spans 325 residues: Lipoyl synthase (325 aa).

[4Fe-4S] cluster is bound by residues Cys-66, Cys-71, Cys-77, Cys-92, Cys-96, Cys-99, and Ser-303. In terms of domain architecture, Radical SAM core spans 78 to 292 (WEDREATFLI…AQFAEGLGFA (215 aa)).

It belongs to the radical SAM superfamily. Lipoyl synthase family. It depends on [4Fe-4S] cluster as a cofactor.

The protein localises to the cytoplasm. The catalysed reaction is [[Fe-S] cluster scaffold protein carrying a second [4Fe-4S](2+) cluster] + N(6)-octanoyl-L-lysyl-[protein] + 2 oxidized [2Fe-2S]-[ferredoxin] + 2 S-adenosyl-L-methionine + 4 H(+) = [[Fe-S] cluster scaffold protein] + N(6)-[(R)-dihydrolipoyl]-L-lysyl-[protein] + 4 Fe(3+) + 2 hydrogen sulfide + 2 5'-deoxyadenosine + 2 L-methionine + 2 reduced [2Fe-2S]-[ferredoxin]. It participates in protein modification; protein lipoylation via endogenous pathway; protein N(6)-(lipoyl)lysine from octanoyl-[acyl-carrier-protein]: step 2/2. Catalyzes the radical-mediated insertion of two sulfur atoms into the C-6 and C-8 positions of the octanoyl moiety bound to the lipoyl domains of lipoate-dependent enzymes, thereby converting the octanoylated domains into lipoylated derivatives. The polypeptide is Lipoyl synthase (Mycobacterium sp. (strain JLS)).